The chain runs to 108 residues: Large ribosomal subunit protein uL24 (108 aa).

Belongs to the universal ribosomal protein uL24 family. In terms of assembly, part of the 50S ribosomal subunit.

In terms of biological role, one of two assembly initiator proteins, it binds directly to the 5'-end of the 23S rRNA, where it nucleates assembly of the 50S subunit. Functionally, one of the proteins that surrounds the polypeptide exit tunnel on the outside of the subunit. This Frankia casuarinae (strain DSM 45818 / CECT 9043 / HFP020203 / CcI3) protein is Large ribosomal subunit protein uL24.